Reading from the N-terminus, the 171-residue chain is uncharacterized protein (171 aa).

This sequence belongs to the IUNH family.

This is an uncharacterized protein from Acidianus ambivalens (Desulfurolobus ambivalens).